The primary structure comprises 236 residues: Purine nucleoside phosphorylase (236 aa).

Residue H5 coordinates a purine D-ribonucleoside. Phosphate is bound by residues G21, R25, R43, and 86 to 89; that span reads RYGT. A purine D-ribonucleoside contacts are provided by residues E163, 180-182, and 204-205; these read EME and SD.

Belongs to the PNP/UDP phosphorylase family. In terms of assembly, homohexamer; disulfide-linked. Trimer of homodimers, with three symmetric intersubunit disulfide bonds linking the dimers to one another.

It carries out the reaction S-methyl-5'-thioadenosine + phosphate = 5-(methylsulfanyl)-alpha-D-ribose 1-phosphate + adenine. The catalysed reaction is a purine D-ribonucleoside + phosphate = a purine nucleobase + alpha-D-ribose 1-phosphate. It catalyses the reaction a purine 2'-deoxy-D-ribonucleoside + phosphate = a purine nucleobase + 2-deoxy-alpha-D-ribose 1-phosphate. The protein operates within purine metabolism; purine nucleoside salvage. Functionally, cleavage of guanosine or inosine to respective bases and sugar-1-phosphate molecules. Cleaves inosine, guanosine, and adenosine with a better efficiency than MTA. This is Purine nucleoside phosphorylase from Saccharolobus solfataricus (strain ATCC 35092 / DSM 1617 / JCM 11322 / P2) (Sulfolobus solfataricus).